Here is a 332-residue protein sequence, read N- to C-terminus: Beta-chimaerin (332 aa).

The segment at 78–128 (THNFKVHTFRGPHWCEYCANFMWGLIAQGVRCSDCGLNVHKQCSKHVPNDC) adopts a Phorbol-ester/DAG-type zinc-finger fold. Residues 141-332 (CDLTTLVKAH…ILIENEDVLF (192 aa)) form the Rho-GAP domain.

The protein resides in the membrane. With respect to regulation, in the inactive state, the N terminus protrudes into the active site of the Rho-GAP domain, sterically blocking Rac binding. Phospholipid binding to the Phorbol-ester/DAG-type zinc-finger/C1 domain triggers the cooperative dissociation of these interactions, allowing the N-terminus to move out of the active site and thereby activating the enzyme. GTPase-activating protein for p21-rac. The sequence is that of Beta-chimaerin (Chn2) from Mus musculus (Mouse).